A 357-amino-acid chain; its full sequence is Phosphate acyltransferase (357 aa).

Belongs to the PlsX family. As to quaternary structure, homodimer. Probably interacts with PlsY.

The protein localises to the cytoplasm. The enzyme catalyses a fatty acyl-[ACP] + phosphate = an acyl phosphate + holo-[ACP]. It functions in the pathway lipid metabolism; phospholipid metabolism. Functionally, catalyzes the reversible formation of acyl-phosphate (acyl-PO(4)) from acyl-[acyl-carrier-protein] (acyl-ACP). This enzyme utilizes acyl-ACP as fatty acyl donor, but not acyl-CoA. The protein is Phosphate acyltransferase of Roseobacter denitrificans (strain ATCC 33942 / OCh 114) (Erythrobacter sp. (strain OCh 114)).